The chain runs to 252 residues: tRNA (guanine-N(7)-)-methyltransferase (252 aa).

S-adenosyl-L-methionine contacts are provided by Glu-51, Asp-76, Asn-103, and Asp-125. Residue Asp-125 is part of the active site. Substrate contacts are provided by residues Lys-129, Asp-159, and 199–202; that span reads TYYE.

Belongs to the class I-like SAM-binding methyltransferase superfamily. TrmB family.

It carries out the reaction guanosine(46) in tRNA + S-adenosyl-L-methionine = N(7)-methylguanosine(46) in tRNA + S-adenosyl-L-homocysteine. The protein operates within tRNA modification; N(7)-methylguanine-tRNA biosynthesis. In terms of biological role, catalyzes the formation of N(7)-methylguanine at position 46 (m7G46) in tRNA. The sequence is that of tRNA (guanine-N(7)-)-methyltransferase from Bacteroides thetaiotaomicron (strain ATCC 29148 / DSM 2079 / JCM 5827 / CCUG 10774 / NCTC 10582 / VPI-5482 / E50).